The primary structure comprises 118 residues: Basic phospholipase A2 PA-15 (118 aa).

Cystine bridges form between Cys-11-Cys-71, Cys-27-Cys-117, Cys-29-Cys-45, Cys-44-Cys-98, Cys-51-Cys-91, Cys-60-Cys-84, and Cys-78-Cys-89. Positions 28, 30, and 32 each coordinate Ca(2+). His-48 is a catalytic residue. Asp-49 is a binding site for Ca(2+). Asp-92 is a catalytic residue.

Belongs to the phospholipase A2 family. Group I subfamily. D49 sub-subfamily. Ca(2+) serves as cofactor. Expressed by the venom gland.

Its subcellular location is the secreted. The enzyme catalyses a 1,2-diacyl-sn-glycero-3-phosphocholine + H2O = a 1-acyl-sn-glycero-3-phosphocholine + a fatty acid + H(+). Its function is as follows. PLA2 catalyzes the calcium-dependent hydrolysis of the 2-acyl groups in 3-sn-phosphoglycerides. The chain is Basic phospholipase A2 PA-15 from Pseudechis australis (Mulga snake).